The sequence spans 247 residues: MAQPDDAALPFSLLQFYATSPYPCSYLPDREARSQVATPAHLIDSEIYSSLIRTGFRRSGIFTYRPHCDGCKACVPVRLPVTELRPNRSQRRAMKHHAKLRVRELPLVYIDEHYALYNRYQQARHPGGGMDEDSHEQYAQFLLQSRVDTRLIEFSDDEGIRMVSLIDVLDDGLSSVYTFYDPDIPDASFGTYNILWQAAQCQALGLPYLYLGYWIANSRKMAYKAMFQPIEGLIDGHWLALPKLEKT.

Belongs to the R-transferase family. Bpt subfamily.

It is found in the cytoplasm. The catalysed reaction is N-terminal L-glutamyl-[protein] + L-leucyl-tRNA(Leu) = N-terminal L-leucyl-L-glutamyl-[protein] + tRNA(Leu) + H(+). The enzyme catalyses N-terminal L-aspartyl-[protein] + L-leucyl-tRNA(Leu) = N-terminal L-leucyl-L-aspartyl-[protein] + tRNA(Leu) + H(+). Its function is as follows. Functions in the N-end rule pathway of protein degradation where it conjugates Leu from its aminoacyl-tRNA to the N-termini of proteins containing an N-terminal aspartate or glutamate. The polypeptide is Aspartate/glutamate leucyltransferase (Dechloromonas aromatica (strain RCB)).